Consider the following 163-residue polypeptide: Phosphopantetheine adenylyltransferase (163 aa).

Serine 9 is a substrate binding site. ATP-binding positions include 9 to 10 (SF) and histidine 17. Substrate is bound by residues lysine 41, isoleucine 75, and arginine 89. ATP-binding positions include 90–92 (GIR), glutamate 100, and 125–131 (HLYVRSD).

The protein belongs to the bacterial CoaD family. In terms of assembly, homohexamer. Requires Mg(2+) as cofactor.

It is found in the cytoplasm. The enzyme catalyses (R)-4'-phosphopantetheine + ATP + H(+) = 3'-dephospho-CoA + diphosphate. It participates in cofactor biosynthesis; coenzyme A biosynthesis; CoA from (R)-pantothenate: step 4/5. In terms of biological role, reversibly transfers an adenylyl group from ATP to 4'-phosphopantetheine, yielding dephospho-CoA (dPCoA) and pyrophosphate. The chain is Phosphopantetheine adenylyltransferase from Borrelia garinii subsp. bavariensis (strain ATCC BAA-2496 / DSM 23469 / PBi) (Borreliella bavariensis).